A 595-amino-acid polypeptide reads, in one-letter code: L-fucose isomerase (595 aa).

Active-site proton acceptor residues include Glu341 and Asp365. Residues Glu341, Asp365, and His531 each contribute to the Mn(2+) site.

It belongs to the L-fucose isomerase family. Mn(2+) is required as a cofactor.

It localises to the cytoplasm. The enzyme catalyses L-fucose = L-fuculose. The protein operates within carbohydrate degradation; L-fucose degradation; L-lactaldehyde and glycerone phosphate from L-fucose: step 1/3. In terms of biological role, converts the aldose L-fucose into the corresponding ketose L-fuculose. This is L-fucose isomerase from Clostridium perfringens (strain 13 / Type A).